Consider the following 218-residue polypeptide: Ribose-5-phosphate isomerase A (218 aa).

Substrate contacts are provided by residues 28–31 (TGST), 81–84 (DGAD), and 94–97 (KGGG). Catalysis depends on Glu103, which acts as the Proton acceptor. Lys121 lines the substrate pocket.

The protein belongs to the ribose 5-phosphate isomerase family. As to quaternary structure, homodimer.

The enzyme catalyses aldehydo-D-ribose 5-phosphate = D-ribulose 5-phosphate. It functions in the pathway carbohydrate degradation; pentose phosphate pathway; D-ribose 5-phosphate from D-ribulose 5-phosphate (non-oxidative stage): step 1/1. Its function is as follows. Catalyzes the reversible conversion of ribose-5-phosphate to ribulose 5-phosphate. In Vibrio campbellii (strain ATCC BAA-1116), this protein is Ribose-5-phosphate isomerase A.